Consider the following 214-residue polypeptide: Large ribosomal subunit protein uL3 (214 aa).

The segment at 134–153 is disordered; sequence ATHGNSLSHRAPGSIGQNQT. At Q152 the chain carries N5-methylglutamine.

The protein belongs to the universal ribosomal protein uL3 family. As to quaternary structure, part of the 50S ribosomal subunit. Forms a cluster with proteins L14 and L19. Post-translationally, methylated by PrmB.

Its function is as follows. One of the primary rRNA binding proteins, it binds directly near the 3'-end of the 23S rRNA, where it nucleates assembly of the 50S subunit. This Buchnera aphidicola subsp. Baizongia pistaciae (strain Bp) protein is Large ribosomal subunit protein uL3.